Consider the following 146-residue polypeptide: Large ribosomal subunit protein uL15 (146 aa).

Positions 1–13 (MKLHELKAAEGSR) are enriched in basic and acidic residues. The segment at 1–56 (MKLHELKAAEGSRRVRNRVGRGAGSGNGKTSGRGQKGQKARSGGGVRPGFEGGQLP) is disordered. Composition is skewed to gly residues over residues 21–35 (RGAG…GRGQ) and 42–52 (SGGGVRPGFEG).

This sequence belongs to the universal ribosomal protein uL15 family. Part of the 50S ribosomal subunit.

Functionally, binds to the 23S rRNA. The polypeptide is Large ribosomal subunit protein uL15 (Staphylococcus haemolyticus (strain JCSC1435)).